The primary structure comprises 781 residues: Isoquinoline 1-oxidoreductase subunit beta (781 aa).

As to quaternary structure, heterodimer of an alpha chain and a beta chain.

The enzyme catalyses isoquinoline + A + H2O = isoquinolin-1(2H)-one + AH2. Its function is as follows. Specific towards N-containing N-heterocyclic substrates, including isoquinoline, isoquinolin-5-ol, phthalazine and quinazoline. The polypeptide is Isoquinoline 1-oxidoreductase subunit beta (iorB) (Brevundimonas diminuta (Pseudomonas diminuta)).